The sequence spans 270 residues: Eukaryotic translation initiation factor 2 subunit beta (270 aa).

Positions 1–38 (MADEEQMERKEEATEIAPFDPTKKKKKKKVVIQDPADE) are disordered.

Belongs to the eIF-2-beta/eIF-5 family. In terms of assembly, eukaryotic translation initiation factor 2 eIF2 is a heterotrimeric complex composed of an alpha, a beta and a gamma subunit.

Its subcellular location is the cytoplasm. It is found in the cytosol. In terms of biological role, component of the eIF2 complex that functions in the early steps of protein synthesis by forming a ternary complex with GTP and initiator tRNA. This complex binds to a 40S ribosomal subunit, followed by mRNA binding to form a 43S pre-initiation complex (43S PIC). Junction of the 60S ribosomal subunit to form the 80S initiation complex is preceded by hydrolysis of the GTP bound to eIF2 and release of an eIF2-GDP binary complex. In order for eIF2 to recycle and catalyze another round of initiation, the GDP bound to eIF2 must exchange with GTP by way of a reaction catalyzed by eIF2B. The protein is Eukaryotic translation initiation factor 2 subunit beta of Triticum aestivum (Wheat).